Consider the following 238-residue polypeptide: Zinc import ATP-binding protein ZnuC (238 aa).

The region spanning 5–220 (IQLNNISVNF…SEFIAIFGNI (216 aa)) is the ABC transporter domain. 37–44 (GPNGAGKS) contributes to the ATP binding site.

This sequence belongs to the ABC transporter superfamily. Zinc importer (TC 3.A.1.15.5) family. In terms of assembly, the complex is composed of two ATP-binding proteins (ZnuC), two transmembrane proteins (ZnuB) and a solute-binding protein (ZnuA).

Its subcellular location is the cell membrane. It carries out the reaction Zn(2+)(out) + ATP(in) + H2O(in) = Zn(2+)(in) + ADP(in) + phosphate(in) + H(+)(in). In terms of biological role, part of the ABC transporter complex ZnuABC involved in zinc import. Responsible for energy coupling to the transport system. This chain is Zinc import ATP-binding protein ZnuC, found in Buchnera aphidicola subsp. Baizongia pistaciae (strain Bp).